Here is a 126-residue protein sequence, read N- to C-terminus: Histone H2B type 1-O (126 aa).

The segment covering 1 to 12 (MPDPAKSAPAPK) has biased composition (low complexity). A disordered region spans residues 1 to 35 (MPDPAKSAPAPKKGSKKAVTKAQKKDGKKRKRSRK). At Pro-2 the chain carries N-acetylproline; partial. Position 6 is an N6-(2-hydroxyisobutyryl)lysine; alternate (Lys-6). At Lys-6 the chain carries N6-(beta-hydroxybutyryl)lysine; alternate. N6-acetyllysine; alternate is present on Lys-6. Lys-6 is subject to N6-butyryllysine; alternate. Lys-6 carries the N6-crotonyllysine; alternate modification. An N6-lactoyllysine; alternate modification is found at Lys-6. A Glycyl lysine isopeptide (Lys-Gly) (interchain with G-Cter in SUMO2); alternate cross-link involves residue Lys-6. Ser-7 carries the ADP-ribosylserine modification. The residue at position 12 (Lys-12) is an N6-(beta-hydroxybutyryl)lysine; alternate. N6-acetyllysine; alternate occurs at positions 12 and 13. An N6-crotonyllysine; alternate mark is found at Lys-12 and Lys-13. Residue Lys-12 is modified to N6-lactoyllysine; alternate. The residue at position 13 (Lys-13) is an N6-(2-hydroxyisobutyryl)lysine; alternate. Ser-15 carries the phosphoserine; by STK4/MST1 modification. Lys-16, Lys-17, Lys-21, and Lys-24 each carry N6-acetyllysine; alternate. Lys-16, Lys-17, Lys-21, and Lys-24 each carry N6-crotonyllysine; alternate. 4 positions are modified to N6-lactoyllysine; alternate: Lys-16, Lys-17, Lys-21, and Lys-24. N6-(beta-hydroxybutyryl)lysine; alternate is present on residues Lys-17 and Lys-21. Lys-17 is subject to N6-glutaryllysine; alternate. 2 positions are modified to N6-(2-hydroxyisobutyryl)lysine; alternate: Lys-21 and Lys-24. At Lys-21 the chain carries N6-butyryllysine; alternate. Lys-21 is covalently cross-linked (Glycyl lysine isopeptide (Lys-Gly) (interchain with G-Cter in SUMO2); alternate). Lys-25 carries the N6-(2-hydroxyisobutyryl)lysine modification. An N6-(2-hydroxyisobutyryl)lysine; alternate modification is found at Lys-35. Position 35 is an N6-(beta-hydroxybutyryl)lysine; alternate (Lys-35). The residue at position 35 (Lys-35) is an N6-crotonyllysine; alternate. Lys-35 is modified (N6-glutaryllysine; alternate). Residue Lys-35 is modified to N6-succinyllysine; alternate. Residue Lys-35 forms a Glycyl lysine isopeptide (Lys-Gly) (interchain with G-Cter in ubiquitin); alternate linkage. The residue at position 36 (Glu-36) is a PolyADP-ribosyl glutamic acid. The residue at position 37 (Ser-37) is a Phosphoserine; by AMPK. An N6-(2-hydroxyisobutyryl)lysine; alternate mark is found at Lys-44, Lys-47, and Lys-58. N6-lactoyllysine; alternate is present on Lys-44. Residues Lys-44 and Lys-47 each carry the N6-glutaryllysine; alternate modification. Lys-47 is modified (N6-methyllysine; alternate). An N6,N6-dimethyllysine; alternate modification is found at Lys-58. The residue at position 80 (Arg-80) is a Dimethylated arginine. Position 86 is an N6-(2-hydroxyisobutyryl)lysine; alternate (Lys-86). Lys-86 carries the post-translational modification N6-(beta-hydroxybutyryl)lysine; alternate. Lys-86 carries the post-translational modification N6-acetyllysine; alternate. The residue at position 86 (Lys-86) is an N6-lactoyllysine; alternate. An N6,N6,N6-trimethyllysine; alternate modification is found at Lys-86. Omega-N-methylarginine is present on residues Arg-87 and Arg-93. At Lys-109 the chain carries N6-(2-hydroxyisobutyryl)lysine; alternate. At Lys-109 the chain carries N6-lactoyllysine; alternate. Lys-109 carries the post-translational modification N6-glutaryllysine; alternate. Lys-109 carries the post-translational modification N6-methyllysine; alternate. A glycan (O-linked (GlcNAc) serine) is linked at Ser-113. Phosphothreonine is present on Thr-116. Lys-117 and Lys-121 each carry N6-(2-hydroxyisobutyryl)lysine; alternate. Residues Lys-117 and Lys-121 each carry the N6-(beta-hydroxybutyryl)lysine; alternate modification. 2 positions are modified to N6-lactoyllysine; alternate: Lys-117 and Lys-121. Lys-117 and Lys-121 each carry N6-glutaryllysine; alternate. N6-succinyllysine; alternate occurs at positions 117 and 121. Lys-117 bears the N6-malonyllysine; alternate mark. At Lys-117 the chain carries N6-methylated lysine; alternate. Residue Lys-121 forms a Glycyl lysine isopeptide (Lys-Gly) (interchain with G-Cter in ubiquitin); alternate linkage.

This sequence belongs to the histone H2B family. As to quaternary structure, the nucleosome is a histone octamer containing two molecules each of H2A, H2B, H3 and H4 assembled in one H3-H4 heterotetramer and two H2A-H2B heterodimers. The octamer wraps approximately 147 bp of DNA. In terms of processing, monoubiquitination at Lys-35 (H2BK34Ub) by the MSL1/MSL2 dimer is required for histone H3 'Lys-4' (H3K4me) and 'Lys-79' (H3K79me) methylation and transcription activation at specific gene loci, such as HOXA9 and MEIS1 loci. Similarly, monoubiquitination at Lys-121 (H2BK120Ub) by the RNF20/40 complex gives a specific tag for epigenetic transcriptional activation and is also prerequisite for histone H3 'Lys-4' and 'Lys-79' methylation. It also functions cooperatively with the FACT dimer to stimulate elongation by RNA polymerase II. H2BK120Ub also acts as a regulator of mRNA splicing: deubiquitination by USP49 is required for efficient cotranscriptional splicing of a large set of exons. Phosphorylation at Ser-37 (H2BS36ph) by AMPK in response to stress promotes transcription. Phosphorylated on Ser-15 (H2BS14ph) by STK4/MST1 during apoptosis; which facilitates apoptotic chromatin condensation. Also phosphorylated on Ser-15 in response to DNA double strand breaks (DSBs), and in correlation with somatic hypermutation and immunoglobulin class-switch recombination. Post-translationally, glcNAcylation at Ser-113 promotes monoubiquitination of Lys-121. It fluctuates in response to extracellular glucose, and associates with transcribed genes. In terms of processing, ADP-ribosylated by PARP1 or PARP2 on Ser-7 (H2BS6ADPr) in response to DNA damage. H2BS6ADPr promotes recruitment of CHD1L. Poly ADP-ribosylation on Glu-36 (H2BE35ADPr) by PARP1 regulates adipogenesis: it inhibits phosphorylation at Ser-37 (H2BS36ph), thereby blocking expression of pro-adipogenetic genes. Crotonylation (Kcr) is specifically present in male germ cells and marks testis-specific genes in post-meiotic cells, including X-linked genes that escape sex chromosome inactivation in haploid cells. Crotonylation marks active promoters and enhancers and confers resistance to transcriptional repressors. It is also associated with post-meiotically activated genes on autosomes. Post-translationally, lactylated in macrophages by EP300/P300 by using lactoyl-CoA directly derived from endogenous or exogenous lactate, leading to stimulates gene transcription.

Its subcellular location is the nucleus. It localises to the chromosome. In terms of biological role, core component of nucleosome. Nucleosomes wrap and compact DNA into chromatin, limiting DNA accessibility to the cellular machineries which require DNA as a template. Histones thereby play a central role in transcription regulation, DNA repair, DNA replication and chromosomal stability. DNA accessibility is regulated via a complex set of post-translational modifications of histones, also called histone code, and nucleosome remodeling. The sequence is that of Histone H2B type 1-O from Homo sapiens (Human).